Here is a 128-residue protein sequence, read N- to C-terminus: 3-aminoacrylate deaminase RutC (128 aa).

The protein belongs to the RutC family.

The catalysed reaction is (Z)-3-aminoacrylate + H2O + H(+) = 3-oxopropanoate + NH4(+). In terms of biological role, involved in pyrimidine catabolism. Catalyzes the deamination of 3-aminoacrylate to malonic semialdehyde, a reaction that can also occur spontaneously. RutC may facilitate the reaction and modulate the metabolic fitness, rather than catalyzing essential functions. The polypeptide is 3-aminoacrylate deaminase RutC (Azorhizobium caulinodans (strain ATCC 43989 / DSM 5975 / JCM 20966 / LMG 6465 / NBRC 14845 / NCIMB 13405 / ORS 571)).